We begin with the raw amino-acid sequence, 246 residues long: E3 ubiquitin-protein ligase MARCHF2 (246 aa).

An RING-CH-type zinc finger spans residues 56–116; sequence DTPSDCPFCR…ELCHTEFAVE (61 aa). Positions 64, 67, 80, 82, 90, 93, 106, and 109 each coordinate Zn(2+). The tract at residues 121–246 is required for interaction with IKBKG; that stretch reads PLTEWLKDPG…LKKVAEETPV (126 aa). The next 2 membrane-spanning stretches (helical) occupy residues 138-158 and 175-195; these read LCCD…SGWL and AVGL…WTLV.

Interacts with STX6; the interaction promotes MARCHF2-mediated ubiquitination and degradation of CFTR. Interacts with MARCHF3. Interacts with GOPC/CAL; the interaction leads to CFTR ubiquitination and degradation. Interacts with CFTR; the interaction leads to CFTR ubiqtuitination and degradation. Interacts (via PDZ domain) with DLG1 (via PDZ domains); the interaction leads to DLG1 ubiqtuitination and degradation. Interacts with ERGIC3. Interacts with ADRB2. Interacts with IKBKG/NEMO; during the late stages of macrophage viral and bacterial infection; the interaction leads to ubiquitination and degradation of IKBKG/NEMO. In terms of tissue distribution, ubiquitously expressed. Present in liver (at protein level).

Its subcellular location is the endoplasmic reticulum membrane. The protein resides in the lysosome membrane. The protein localises to the endosome membrane. It localises to the golgi apparatus membrane. It is found in the cytoplasm. Its subcellular location is the cell membrane. It catalyses the reaction S-ubiquitinyl-[E2 ubiquitin-conjugating enzyme]-L-cysteine + [acceptor protein]-L-lysine = [E2 ubiquitin-conjugating enzyme]-L-cysteine + N(6)-ubiquitinyl-[acceptor protein]-L-lysine.. It functions in the pathway protein modification; protein ubiquitination. Its function is as follows. E3 ubiquitin-protein ligase that may mediate ubiquitination of TFRC and CD86, and promote their subsequent endocytosis and sorting to lysosomes via multivesicular bodies. E3 ubiquitin ligases accept ubiquitin from an E2 ubiquitin-conjugating enzyme in the form of a thioester and then directly transfer the ubiquitin to targeted substrates. Together with GOPC/CAL mediates the ubiquitination and lysosomal degradation of CFTR. Ubiquitinates and therefore mediates the degradation of DLG1. Regulates the intracellular trafficking and secretion of alpha1-antitrypsin/SERPINA1 and HP/haptoglobin via ubiquitination and degradation of the cargo receptor ERGIC3. Negatively regulates the antiviral and antibacterial immune response by repression of the NF-kB and type 1 IFN signaling pathways, via MARCHF2-mediated K48-linked polyubiquitination of IKBKG/NEMO, resulting in its proteasomal degradation. May be involved in endosomal trafficking through interaction with STX6. This chain is E3 ubiquitin-protein ligase MARCHF2 (Marchf2), found in Rattus norvegicus (Rat).